A 336-amino-acid chain; its full sequence is MIEADRLISADIQQPEEEIIDRAIRPKLLAEYVGQPQVREQMEIFIQAAKLRHDALDHLLIFGPPGLGKTTLANIIANEMGVNLRTTSGPVLEKAGDLAAMLTNLEPHDVLFIDEIHRLSPVVEEILYPAMEDYQLDIMIGEGPAARSIKIDLPPFTLVGATTRAGSLTSPLRDRFGIVQRLEFYNVDDLQHIVARSASFMGLEITAEGARQIAMRSRGTPRITNRLLRRVRDFAQVKGNGEIDEDIASKALDMLNVDAAGFDYLDRKLLFAIIDKFMGGPVGLDNLAAAIGEERETIEDVLEPYLIQQGFIQRTPRGRVATNHAYRHFNRIMEAP.

Positions 4 to 185 (ADRLISADIQ…FGIVQRLEFY (182 aa)) are large ATPase domain (RuvB-L). ATP contacts are provided by residues I24, R25, G66, K69, T70, T71, 132–134 (EDY), R175, Y185, and R222. T70 is a Mg(2+) binding site. The tract at residues 186-256 (NVDDLQHIVA…IASKALDMLN (71 aa)) is small ATPAse domain (RuvB-S). A head domain (RuvB-H) region spans residues 259-336 (AAGFDYLDRK…RHFNRIMEAP (78 aa)). DNA contacts are provided by R295, R314, and R319.

The protein belongs to the RuvB family. Homohexamer. Forms an RuvA(8)-RuvB(12)-Holliday junction (HJ) complex. HJ DNA is sandwiched between 2 RuvA tetramers; dsDNA enters through RuvA and exits via RuvB. An RuvB hexamer assembles on each DNA strand where it exits the tetramer. Each RuvB hexamer is contacted by two RuvA subunits (via domain III) on 2 adjacent RuvB subunits; this complex drives branch migration. In the full resolvosome a probable DNA-RuvA(4)-RuvB(12)-RuvC(2) complex forms which resolves the HJ.

Its subcellular location is the cytoplasm. The enzyme catalyses ATP + H2O = ADP + phosphate + H(+). Its function is as follows. The RuvA-RuvB-RuvC complex processes Holliday junction (HJ) DNA during genetic recombination and DNA repair, while the RuvA-RuvB complex plays an important role in the rescue of blocked DNA replication forks via replication fork reversal (RFR). RuvA specifically binds to HJ cruciform DNA, conferring on it an open structure. The RuvB hexamer acts as an ATP-dependent pump, pulling dsDNA into and through the RuvAB complex. RuvB forms 2 homohexamers on either side of HJ DNA bound by 1 or 2 RuvA tetramers; 4 subunits per hexamer contact DNA at a time. Coordinated motions by a converter formed by DNA-disengaged RuvB subunits stimulates ATP hydrolysis and nucleotide exchange. Immobilization of the converter enables RuvB to convert the ATP-contained energy into a lever motion, pulling 2 nucleotides of DNA out of the RuvA tetramer per ATP hydrolyzed, thus driving DNA branch migration. The RuvB motors rotate together with the DNA substrate, which together with the progressing nucleotide cycle form the mechanistic basis for DNA recombination by continuous HJ branch migration. Branch migration allows RuvC to scan DNA until it finds its consensus sequence, where it cleaves and resolves cruciform DNA. This Proteus mirabilis (strain HI4320) protein is Holliday junction branch migration complex subunit RuvB.